We begin with the raw amino-acid sequence, 350 residues long: Delta(6)-protoilludene synthase STEHIDRAFT_64702 (350 aa).

Residues aspartate 89, asparagine 225, serine 229, and glutamate 233 each coordinate Mg(2+). A D(D/E)XX(D/E) motif motif is present at residues 89-93 (DEHSD). The NSE motif signature appears at 225–233 (NDIVSYNIE). 2 residues coordinate (2E,6E)-farnesyl diphosphate: arginine 314 and tyrosine 315.

This sequence belongs to the terpene synthase family. The cofactor is Mg(2+). Requires Mn(2+) as cofactor. Ca(2+) is required as a cofactor. It depends on Ni(2+) as a cofactor. Co(2+) serves as cofactor.

It carries out the reaction (2E,6E)-farnesyl diphosphate = Delta(6)-protoilludene + diphosphate. The catalysed reaction is (2E,6E)-farnesyl diphosphate = alpha-selinene + diphosphate. Its activity is regulated as follows. Ca(2+) switches the cyclization mechanism of delta(6)-protoilludene synthase from 1,11 to 1,10 cyclization which leads to the production of beta-elemene. In terms of biological role, terpene cyclase that catalyzes the cyclization of farnesyl diphosphate (FPP) to delta(6)-protoilludene. In presence of Ca(2+), a significant switch from 1,11 to a dual 1,11/1,10 cyclization occurs, producing beta-elemene as the major product, with lower levels of delta(6)-protoilludene and (E)-beta-caryophyllene, and traces of beta-selinene and alpha-selinene. This is Delta(6)-protoilludene synthase STEHIDRAFT_64702 from Stereum hirsutum (strain FP-91666) (White-rot fungus).